A 313-amino-acid polypeptide reads, in one-letter code: Formate-nitrite transporter (313 aa).

Residues Met-1–Ala-47 lie on the Cytoplasmic side of the membrane. The chain crosses the membrane as a helical span at residues Ile-48–Phe-68. The Extracellular segment spans residues Tyr-69–Val-77. The chain crosses the membrane as a helical span at residues Gly-78–Ile-98. The Cytoplasmic portion of the chain corresponds to Cys-99–Arg-128. Residues Val-129 to Ser-149 traverse the membrane as a helical segment. Over Tyr-150–Cys-185 the chain is Extracellular. An N-linked (GlcNAc...) asparagine glycan is attached at Asn-179. A helical transmembrane segment spans residues Ile-186–Ile-206. The Cytoplasmic segment spans residues Lys-207–Gly-211. The chain crosses the membrane as a helical span at residues Met-212 to Ile-232. At Ala-233–Pro-260 the chain is on the extracellular side. The N-linked (GlcNAc...) asparagine glycan is linked to Asn-239. A helical membrane pass occupies residues Thr-261 to Tyr-281. Residues Arg-282–Thr-313 lie on the Cytoplasmic side of the membrane.

The protein belongs to the FNT transporter (TC 1.A.16) family. Homopentamer.

The protein resides in the cell membrane. It is found in the vacuole membrane. The catalysed reaction is (S)-lactate(in) + H(+)(in) = (S)-lactate(out) + H(+)(out). The enzyme catalyses formate(in) + H(+)(in) = formate(out) + H(+)(out). It carries out the reaction pyruvate(out) + H(+)(out) = pyruvate(in) + H(+)(in). It catalyses the reaction acetate(out) + H(+)(out) = acetate(in) + H(+)(in). Its activity is regulated as follows. Inhibited by the Malaria Box compound MMV007839 and its derivatives BH296 and BH267.meta. Monocarboxylate-proton symporter that mediates the efflux of the waste product lactate in the intraerythrocytic parasites; active in acidic-to-neutral pH range. Transports L-lactate. The sequence is that of Formate-nitrite transporter from Plasmodium ovale.